A 507-amino-acid polypeptide reads, in one-letter code: ATP synthase subunit alpha, chloroplastic (507 aa).

170–177 (GDRQTGKT) is an ATP binding site. Thr-257 carries the post-translational modification Phosphothreonine.

Belongs to the ATPase alpha/beta chains family. As to quaternary structure, F-type ATPases have 2 components, CF(1) - the catalytic core - and CF(0) - the membrane proton channel. CF(1) has five subunits: alpha(3), beta(3), gamma(1), delta(1), epsilon(1). CF(0) has four main subunits: a, b, b' and c.

It is found in the plastid. The protein resides in the chloroplast thylakoid membrane. It carries out the reaction ATP + H2O + 4 H(+)(in) = ADP + phosphate + 5 H(+)(out). Produces ATP from ADP in the presence of a proton gradient across the membrane. The alpha chain is a regulatory subunit. This chain is ATP synthase subunit alpha, chloroplastic, found in Capsella bursa-pastoris (Shepherd's purse).